A 210-amino-acid chain; its full sequence is High frequency lysogenization protein HflD homolog (210 aa).

Positions 103–130 form a coiled coil; the sequence is EAKAKLAERLQQIERQLPLYENDIMADQ.

The protein belongs to the HflD family.

It is found in the cytoplasm. The protein localises to the cell inner membrane. This Actinobacillus pleuropneumoniae serotype 5b (strain L20) protein is High frequency lysogenization protein HflD homolog.